We begin with the raw amino-acid sequence, 248 residues long: 2,3-bisphosphoglycerate-dependent phosphoglycerate mutase (248 aa).

Residues 8-15 (RHGESTWN), 21-22 (TG), R60, 87-90 (ERHY), K98, and 114-115 (RR) each bind substrate. The Tele-phosphohistidine intermediate role is filled by H9. The Proton donor/acceptor role is filled by E87. Residues 118–137 (DTPPPALEPTDPRASYDDPR) form a disordered region. Residues 127-137 (TDPRASYDDPR) are compositionally biased toward basic and acidic residues. Residue 183–184 (GN) coordinates substrate.

The protein belongs to the phosphoglycerate mutase family. BPG-dependent PGAM subfamily. In terms of assembly, homodimer.

It catalyses the reaction (2R)-2-phosphoglycerate = (2R)-3-phosphoglycerate. The protein operates within carbohydrate degradation; glycolysis; pyruvate from D-glyceraldehyde 3-phosphate: step 3/5. Catalyzes the interconversion of 2-phosphoglycerate and 3-phosphoglycerate. This is 2,3-bisphosphoglycerate-dependent phosphoglycerate mutase from Cupriavidus necator (strain ATCC 17699 / DSM 428 / KCTC 22496 / NCIMB 10442 / H16 / Stanier 337) (Ralstonia eutropha).